A 449-amino-acid chain; its full sequence is Trigger factor (449 aa).

Residues glycine 162–proline 242 enclose the PPIase FKBP-type domain. The segment at alanine 428–alanine 449 is disordered. Residues proline 438–alanine 449 show a composition bias toward low complexity.

Belongs to the FKBP-type PPIase family. Tig subfamily.

The protein resides in the cytoplasm. It carries out the reaction [protein]-peptidylproline (omega=180) = [protein]-peptidylproline (omega=0). In terms of biological role, involved in protein export. Acts as a chaperone by maintaining the newly synthesized protein in an open conformation. Functions as a peptidyl-prolyl cis-trans isomerase. The chain is Trigger factor from Acidothermus cellulolyticus (strain ATCC 43068 / DSM 8971 / 11B).